Reading from the N-terminus, the 363-residue chain is Mannose-1-phosphate guanyltransferase (363 aa).

This sequence belongs to the transferase hexapeptide repeat family.

The protein resides in the cytoplasm. The catalysed reaction is alpha-D-mannose 1-phosphate + GTP + H(+) = GDP-alpha-D-mannose + diphosphate. Its pathway is nucleotide-sugar biosynthesis; GDP-alpha-D-mannose biosynthesis; GDP-alpha-D-mannose from alpha-D-mannose 1-phosphate (GTP route): step 1/1. Functionally, involved in cell wall synthesis where it is required for glycosylation. Involved in cell cycle progression through cell-size checkpoint. The protein is Mannose-1-phosphate guanyltransferase (MPG1) of Yarrowia lipolytica (strain CLIB 122 / E 150) (Yeast).